A 486-amino-acid chain; its full sequence is Secreted protein C (486 aa).

The first 22 residues, 1–22 (MKINIILLFVGLILAFAVLSNA), serve as a signal peptide directing secretion. The segment at 30 to 332 (GVNPFDNNNS…SGSHGGSSSH (303 aa)) is disordered. The N-linked (GlcNAc...) asparagine glycan is linked to asparagine 37. Over residues 41–60 (SGSGSGSGGGSSSSGSGTGQ) the composition is skewed to gly residues. The segment covering 61–318 (SSGTVSSSGS…TGSSEYSSSS (258 aa)) has biased composition (low complexity). Residues asparagine 73, asparagine 74, asparagine 83, asparagine 112, asparagine 129, asparagine 149, and asparagine 174 are each glycosylated (N-linked (GlcNAc...) asparagine).

This sequence belongs to the Sct family.

It is found in the secreted. This Dictyostelium discoideum (Social amoeba) protein is Secreted protein C.